Here is a 487-residue protein sequence, read N- to C-terminus: Protein nucleotidyltransferase YdiU (487 aa).

8 residues coordinate ATP: Gly90, Gly92, Arg93, Lys113, Asp125, Gly126, Arg176, and Arg183. Residue Asp252 is the Proton acceptor of the active site. Mg(2+) contacts are provided by Asn253 and Asp262. ATP is bound at residue Asp262.

It belongs to the SELO family. Requires Mg(2+) as cofactor. It depends on Mn(2+) as a cofactor.

It catalyses the reaction L-seryl-[protein] + ATP = 3-O-(5'-adenylyl)-L-seryl-[protein] + diphosphate. The enzyme catalyses L-threonyl-[protein] + ATP = 3-O-(5'-adenylyl)-L-threonyl-[protein] + diphosphate. It carries out the reaction L-tyrosyl-[protein] + ATP = O-(5'-adenylyl)-L-tyrosyl-[protein] + diphosphate. The catalysed reaction is L-histidyl-[protein] + UTP = N(tele)-(5'-uridylyl)-L-histidyl-[protein] + diphosphate. It catalyses the reaction L-seryl-[protein] + UTP = O-(5'-uridylyl)-L-seryl-[protein] + diphosphate. The enzyme catalyses L-tyrosyl-[protein] + UTP = O-(5'-uridylyl)-L-tyrosyl-[protein] + diphosphate. In terms of biological role, nucleotidyltransferase involved in the post-translational modification of proteins. It can catalyze the addition of adenosine monophosphate (AMP) or uridine monophosphate (UMP) to a protein, resulting in modifications known as AMPylation and UMPylation. The chain is Protein nucleotidyltransferase YdiU from Pseudomonas syringae pv. tomato (strain ATCC BAA-871 / DC3000).